The chain runs to 311 residues: Cell division protein ZipA (311 aa).

Residues 1 to 5 (MQELR) are Periplasmic-facing. A helical membrane pass occupies residues 6 to 26 (FVLIVVGALAIMALLFHGLWT). The Cytoplasmic segment spans residues 27 to 311 (SKKEGKAKFG…QIVEFKAANA (285 aa)). A compositionally biased stretch (basic and acidic residues) spans 32 to 54 (KAKFGDKPLSKLDLGESEPKESE). The segment at 32–60 (KAKFGDKPLSKLDLGESEPKESEMYVAPE) is disordered.

The protein belongs to the ZipA family. As to quaternary structure, interacts with FtsZ via their C-terminal domains.

The protein resides in the cell inner membrane. Functionally, essential cell division protein that stabilizes the FtsZ protofilaments by cross-linking them and that serves as a cytoplasmic membrane anchor for the Z ring. Also required for the recruitment to the septal ring of downstream cell division proteins. The chain is Cell division protein ZipA from Vibrio vulnificus (strain YJ016).